The chain runs to 318 residues: DNA-directed RNA polymerase subunit alpha 2 (318 aa).

The alpha N-terminal domain (alpha-NTD) stretch occupies residues 1 to 227 (MALENLLHPT…NQLRNIVDIE (227 aa)). Residues 242 to 318 (INPILLKHVE…TLIENWPQDL (77 aa)) are alpha C-terminal domain (alpha-CTD).

The protein belongs to the RNA polymerase alpha chain family. As to quaternary structure, homodimer. The RNAP catalytic core consists of 2 alpha, 1 beta, 1 beta' and 1 omega subunit. When a sigma factor is associated with the core the holoenzyme is formed, which can initiate transcription.

It carries out the reaction RNA(n) + a ribonucleoside 5'-triphosphate = RNA(n+1) + diphosphate. In terms of biological role, DNA-dependent RNA polymerase catalyzes the transcription of DNA into RNA using the four ribonucleoside triphosphates as substrates. This is DNA-directed RNA polymerase subunit alpha 2 from Francisella tularensis subsp. novicida (strain U112).